Consider the following 309-residue polypeptide: tRNA N6-adenosine threonylcarbamoyltransferase (309 aa).

Fe cation is bound by residues H108 and H112. Residues 130 to 134, D163, G176, D180, and N269 each bind substrate; that span reads LVSGG. D293 provides a ligand contact to Fe cation.

This sequence belongs to the KAE1 / TsaD family. It depends on Fe(2+) as a cofactor.

Its subcellular location is the cytoplasm. The catalysed reaction is L-threonylcarbamoyladenylate + adenosine(37) in tRNA = N(6)-L-threonylcarbamoyladenosine(37) in tRNA + AMP + H(+). Its function is as follows. Required for the formation of a threonylcarbamoyl group on adenosine at position 37 (t(6)A37) in tRNAs that read codons beginning with adenine. Is involved in the transfer of the threonylcarbamoyl moiety of threonylcarbamoyl-AMP (TC-AMP) to the N6 group of A37, together with TsaE and TsaB. TsaD likely plays a direct catalytic role in this reaction. This Mycoplasmopsis agalactiae (strain NCTC 10123 / CIP 59.7 / PG2) (Mycoplasma agalactiae) protein is tRNA N6-adenosine threonylcarbamoyltransferase.